An 83-amino-acid chain; its full sequence is U20-theraphotoxin-Cg1a 2 (83 aa).

The N-terminal stretch at 1–21 (MQVSVLITLAVLGVMFVWTSA) is a signal peptide. A propeptide spanning residues 22–47 (AELEERGSDQPAWLKSLERIFQSEER) is cleaved from the precursor. 3 cysteine pairs are disulfide-bonded: Cys-49–Cys-63, Cys-56–Cys-68, and Cys-62–Cys-76.

The protein belongs to the neurotoxin 10 (Hwtx-1) family. 40 (Jztx-35) subfamily. As to expression, expressed by the venom gland.

It is found in the secreted. Its function is as follows. Probable ion channel inhibitor. This chain is U20-theraphotoxin-Cg1a 2, found in Chilobrachys guangxiensis (Chinese earth tiger tarantula).